A 503-amino-acid chain; its full sequence is Lanosterol 14-alpha demethylase (503 aa).

A helical transmembrane segment spans residues Gly24–Phe44. Cys449 contacts heme.

Belongs to the cytochrome P450 family. Requires heme as cofactor. Post-translationally, ubiquitinated by MARCHF6, leading to proteasomal degradation.

It localises to the endoplasmic reticulum membrane. It is found in the microsome membrane. It catalyses the reaction a 14alpha-methyl steroid + 3 reduced [NADPH--hemoprotein reductase] + 3 O2 = a Delta(14) steroid + formate + 3 oxidized [NADPH--hemoprotein reductase] + 4 H2O + 4 H(+). The enzyme catalyses lanosterol + 3 reduced [NADPH--hemoprotein reductase] + 3 O2 = 4,4-dimethyl-5alpha-cholesta-8,14,24-trien-3beta-ol + formate + 3 oxidized [NADPH--hemoprotein reductase] + 4 H2O + 4 H(+). It carries out the reaction 24,25-dihydrolanosterol + 3 reduced [NADPH--hemoprotein reductase] + 3 O2 = 4,4-dimethyl-8,14-cholestadien-3beta-ol + formate + 3 oxidized [NADPH--hemoprotein reductase] + 4 H2O + 4 H(+). The catalysed reaction is a 14alpha-methyl steroid + reduced [NADPH--hemoprotein reductase] + O2 = a 14alpha-hydroxymethyl steroid + oxidized [NADPH--hemoprotein reductase] + H2O + H(+). It catalyses the reaction a 14alpha-hydroxymethyl steroid + reduced [NADPH--hemoprotein reductase] + O2 = a 14alpha-formyl steroid + oxidized [NADPH--hemoprotein reductase] + 2 H2O + H(+). The enzyme catalyses a 14alpha-formyl steroid + reduced [NADPH--hemoprotein reductase] + O2 = a Delta(14) steroid + formate + oxidized [NADPH--hemoprotein reductase] + H2O + 2 H(+). It carries out the reaction lanosterol + reduced [NADPH--hemoprotein reductase] + O2 = 32-hydroxylanosterol + oxidized [NADPH--hemoprotein reductase] + H2O + H(+). The catalysed reaction is 32-hydroxylanosterol + reduced [NADPH--hemoprotein reductase] + O2 = 32-oxolanosterol + oxidized [NADPH--hemoprotein reductase] + 2 H2O + H(+). It catalyses the reaction 32-oxolanosterol + reduced [NADPH--hemoprotein reductase] + O2 = 4,4-dimethyl-5alpha-cholesta-8,14,24-trien-3beta-ol + formate + oxidized [NADPH--hemoprotein reductase] + H2O + 2 H(+). The enzyme catalyses 24,25-dihydrolanosterol + reduced [NADPH--hemoprotein reductase] + O2 = 32-hydroxy-24,25-dihydrolanosterol + oxidized [NADPH--hemoprotein reductase] + H2O + H(+). It carries out the reaction 32-hydroxy-24,25-dihydrolanosterol + reduced [NADPH--hemoprotein reductase] + O2 = 32-oxo-24,25-dihydrolanosterol + oxidized [NADPH--hemoprotein reductase] + 2 H2O + H(+). The catalysed reaction is 32-oxo-24,25-dihydrolanosterol + reduced [NADPH--hemoprotein reductase] + O2 = 4,4-dimethyl-8,14-cholestadien-3beta-ol + formate + oxidized [NADPH--hemoprotein reductase] + H2O + 2 H(+). Its pathway is steroid biosynthesis; zymosterol biosynthesis; zymosterol from lanosterol: step 1/6. Inhibited by azalanstat. Inhibited by azole antifungal agents ketoconazole, itraconazole and fluconazole. Sterol 14alpha-demethylase that plays a critical role in the cholesterol biosynthesis pathway, being cholesterol the major sterol component in mammalian membranes as well as a precursor for bile acid and steroid hormone synthesis. Cytochrome P450 monooxygenase that catalyzes the three-step oxidative removal of the 14alpha-methyl group (C-32) of sterols such as lanosterol (lanosta-8,24-dien-3beta-ol) and 24,25-dihydrolanosterol (DHL) in the form of formate, and converts the sterols to 4,4-dimethyl-5alpha-cholesta-8,14,24-trien-3beta-ol and 4,4-dimethyl-8,14-cholestadien-3beta-ol, respectively, which are intermediates of cholesterol biosynthesis. Can also demethylate substrates not intrinsic to mammals, such as eburicol (24-methylene-24,25-dihydrolanosterol), but at a lower rate than DHL. This Rattus norvegicus (Rat) protein is Lanosterol 14-alpha demethylase.